Reading from the N-terminus, the 507-residue chain is uncharacterized protein (507 aa).

Disordered regions lie at residues 91-162 (NEKT…KKLL), 174-255 (EKLQ…QQQQ), and 309-422 (KRKL…NYST). The segment covering 116-143 (DSSESDSSESESDSSESESESESNETSE) has biased composition (acidic residues). Over residues 144-155 (NESSSSSEPESS) the composition is skewed to low complexity. Over residues 174–193 (EKLQQEQQKQKEAQKPKEKP) the composition is skewed to basic and acidic residues. Composition is skewed to low complexity over residues 194–236 (QQQQ…QQIE), 243–255 (PQQQ…QQQQ), and 313–350 (QSQL…TNKP). Over residues 351-360 (LSKRQKKLLK) the composition is skewed to basic residues. The span at 378-409 (NNKNDNSTNDSNNNNDNNNNNKNDTNDSNNDD) shows a compositional bias: low complexity.

This is an uncharacterized protein from Dictyostelium discoideum (Social amoeba).